A 260-amino-acid chain; its full sequence is Myb transcription factor 42 (260 aa).

2 HTH myb-type domains span residues 9–61 and 62–116; these read KAHT…INYL and RPDL…RRKL. 2 consecutive DNA-binding regions (H-T-H motif) follow at residues 37–61 and 89–112; these read WRSL…INYL and WSLI…NTHI.

In terms of tissue distribution, mainly expressed in the aerial parts and, to a lower extent, in roots.

It localises to the nucleus. Transcription factor that negatively regulates the expression of caffeic acid O-methyl-transferase genes (COMTs) and of other genes involved in the biosynthesis of lignin, thus preventing lignification. The polypeptide is Myb transcription factor 42 (Zea mays (Maize)).